The primary structure comprises 351 residues: Methionine import ATP-binding protein MetN (351 aa).

The region spanning 4-249 is the ABC transporter domain; the sequence is VQLDHVSVTF…PKAELTQKFV (246 aa). 41–48 serves as a coordination point for ATP; sequence GFSGAGKS.

Belongs to the ABC transporter superfamily. Methionine importer (TC 3.A.1.24) family. In terms of assembly, the complex is composed of two ATP-binding proteins (MetN), two transmembrane proteins (MetI) and a solute-binding protein (MetQ).

It is found in the cell membrane. It carries out the reaction L-methionine(out) + ATP + H2O = L-methionine(in) + ADP + phosphate + H(+). The enzyme catalyses D-methionine(out) + ATP + H2O = D-methionine(in) + ADP + phosphate + H(+). In terms of biological role, part of the ABC transporter complex MetNIQ involved in methionine import. Responsible for energy coupling to the transport system. The sequence is that of Methionine import ATP-binding protein MetN from Lactobacillus delbrueckii subsp. bulgaricus (strain ATCC 11842 / DSM 20081 / BCRC 10696 / JCM 1002 / NBRC 13953 / NCIMB 11778 / NCTC 12712 / WDCM 00102 / Lb 14).